The primary structure comprises 857 residues: DNA mismatch repair protein MutS (857 aa).

608 to 615 contacts ATP; sequence GPNMSGKS.

The protein belongs to the DNA mismatch repair MutS family.

In terms of biological role, this protein is involved in the repair of mismatches in DNA. It is possible that it carries out the mismatch recognition step. This protein has a weak ATPase activity. The polypeptide is DNA mismatch repair protein MutS (Lacticaseibacillus casei (strain BL23) (Lactobacillus casei)).